The primary structure comprises 128 residues: Sulfurtransferase TusD (128 aa).

The active-site Cysteine persulfide intermediate is the Cys-78.

This sequence belongs to the DsrE/TusD family. As to quaternary structure, heterohexamer, formed by a dimer of trimers. The hexameric TusBCD complex contains 2 copies each of TusB, TusC and TusD. The TusBCD complex interacts with TusE.

It is found in the cytoplasm. Part of a sulfur-relay system required for 2-thiolation of 5-methylaminomethyl-2-thiouridine (mnm(5)s(2)U) at tRNA wobble positions. Accepts sulfur from TusA and transfers it in turn to TusE. The sequence is that of Sulfurtransferase TusD from Escherichia coli O139:H28 (strain E24377A / ETEC).